We begin with the raw amino-acid sequence, 435 residues long: MDTIQEKYMDNYLKFSGCGCDNFKVERTLNSLLQPLQIDSSDFIKFVTYGGCWINEHCLPSWPYFLDRCSTISEFLSFWCGIVWDTRRTQVHKFKLIKLTQCLFRAYIVVVWVVFPKCRLDFKPKKFLENVWYKYINMPFYKAIVTFMLNLNISIKHPLIQFQSCLPWDLSILRRKNKLFCSTLMPLSVPAPSQRRENENLFVHSDFDDQSHEFALMAALKQQGAMVPCGNPLDAMIKVLCFNSMIQNKYAIIPMDNIEKTENFDLVLKILGYNILSSVFGLPIICKKIKDKIIKNTYSQHIIVCIECGHCLNFGRGKSKNLNFPPTHVFYCRDQKIKQFTICGTSGRIYCSYCGCSQFRKFPMVEANIIRAVIANNAACMAQCASQQFDVVVPCLGMCGSCIFKRVTVQSLLYLTSKIESLCCVKCSGVIYNYA.

This sequence belongs to the herpesviridae UL49 family.

This is an uncharacterized protein from Saimiriine herpesvirus 2 (strain 11) (SaHV-2).